Here is a 95-residue protein sequence, read N- to C-terminus: FMRFamide-like neuropeptides 16 (95 aa).

Residues 1-24 form the signal peptide; the sequence is MSLSGFEFSSIIAVLLLLIQLSSA. The propeptide occupies 25–58; that stretch reads AVLPVDYASQYGVASADEMTALPEEGSLFAERPA. Phenylalanine amide is present on residues F67, F77, and F87. The propeptide occupies 90–95; the sequence is SAPFEQ.

This sequence belongs to the FARP (FMRFamide related peptide) family.

It is found in the secreted. FMRFamides and FMRFamide-like peptides are neuropeptides. AQTFVRF-amide inhibits the activity of dissected pharyngeal myogenic muscle system. This is FMRFamide-like neuropeptides 16 (flp-16) from Caenorhabditis briggsae.